The following is a 541-amino-acid chain: MWDSSMFLSTLTPKFYVALTGTSSLISGLILIFEWWYFRKYGTSFIEQVSINHISPWINGNDAQSDSSNGSGSSTSSGSSSSSNGGGGGGGGGAGGGGPGAGGGTNSTTTTGTQMPECKVWRNPLNLFRGAEYQRFFWATSKEPLTYYDMNLSAQDHQTFFTCEGDARKEEYEIMQTAWRERNPMQRIKSAHNALEINAECAPAYILLAEEEAMTIMEAEKILKTALKVAEINYRKSQATQHQGAIADGMHRRDTNVLIYIKRRLAMCARKLGKLKEAAKMFRDLTKEIPSIMSVLNIHENLIETLLEMQAYADCHAILAKYDDISLPKSATICYTAALLKARAVADKFSPDIASKRGLSPAEMSAVEAIHRAVEFNPHVPKYLLETKPLILPPEHILKRGDSEALAYAFFHLKHWKQVEGALNLLHCTWEGTFRMLPYPLERGHLFYPYPTCTECADRELLPAFHEVSVYPKKELPFFILFTAGLCSFTALLALLTHQYPEPMGLLAQTVLTWISYPFQLLKERVEAFWPCNLLQQLSRV.

Residues 15 to 35 (FYVALTGTSSLISGLILIFEW) form a helical membrane-spanning segment. The disordered stretch occupies residues 62–116 (DAQSDSSNGSGSSTSSGSSSSSNGGGGGGGGGAGGGGPGAGGGTNSTTTTGTQMP). The segment covering 67–83 (SSNGSGSSTSSGSSSSS) has biased composition (low complexity). Residues 84–105 (NGGGGGGGGGAGGGGPGAGGGT) are compositionally biased toward gly residues. The helical transmembrane segment at 476–496 (LPFFILFTAGLCSFTALLALL) threads the bilayer.

This sequence belongs to the ST7 family.

It localises to the membrane. This is Protein ST7 homolog from Drosophila pseudoobscura pseudoobscura (Fruit fly).